Reading from the N-terminus, the 305-residue chain is Olfactory receptor 4F17 (305 aa).

Residues 1–18 (MVTEFIFLGLSDSQGLQT) are Extracellular-facing. The helical transmembrane segment at 19-42 (FLFMLFFVFYGGIVFGNLLIVITV) threads the bilayer. At 43-50 (VSDSHLHS) the chain is on the cytoplasmic side. A helical membrane pass occupies residues 51–72 (PMYFLLANLSLIDLSLSSVTAP). Topologically, residues 73-93 (KMITDFFSQRKVISFKGCLVQ) are extracellular. Cys90 and Cys182 are joined by a disulfide. A helical transmembrane segment spans residues 94-113 (IFLLHFFGGSEMVILIAMGF). Residues 114-132 (DRYIAICKPLHYTTIMCGN) are Cytoplasmic-facing. A helical membrane pass occupies residues 133–151 (ACVGIMAVAWGIGFLHSVS). Residues 152–188 (QLAFAVHLPFCGPNEVDSFYCDLPRVIKLACTDTYRL) are Extracellular-facing. Residues 189–212 (DIMVIANSGVLTVCSFVLLIISYT) form a helical membrane-spanning segment. At 213 to 228 (IILMTIQHRPLDKSSK) the chain is on the cytoplasmic side. The helical transmembrane segment at 229-251 (ALSTLTAHITVVLLFFGPCVFIY) threads the bilayer. The Extracellular portion of the chain corresponds to 252-262 (AWPFPIKSLDK). A helical transmembrane segment spans residues 263–282 (FLAVFYSVITPLLNPIIYTL). Topologically, residues 283–305 (RNKDMKTAIRQLRKWDAHSSVKF) are cytoplasmic.

Belongs to the G-protein coupled receptor 1 family.

It is found in the cell membrane. Its function is as follows. Odorant receptor. This chain is Olfactory receptor 4F17 (OR4F17), found in Homo sapiens (Human).